The chain runs to 150 residues: Galactose-binding lectin (150 aa).

D-galactose is bound by residues His16 and Gly19. Asn26 carries N-linked (GlcNAc...) asparagine glycosylation. D-galactose-binding positions include Asp27, 35–37 (DIH), His64, and Gly67. Asn74 is a glycosylation site (N-linked (GlcNAc...) asparagine). D-galactose is bound by residues Glu75, 83–85 (DRH), His108, and Gly111. Asn118 carries N-linked (GlcNAc...) asparagine glycosylation. D-galactose contacts are provided by residues Glu119 and 127–129 (DKH).

As to quaternary structure, homodimer. Likely to form large oligomers; oligomerization enhances hemagglutination activity. In terms of processing, glycosylated.

Its activity is regulated as follows. Hemagglutination activity is not dependent on divalent cations. Hemagglutination activity is highly inhibited by D-galactose and N-acetyl-D-galactosamine, and to a lesser extent by raffinose. Also inhibited by melibiose and alpha-lactose, but not by beta-lactose or D-glucose. Its function is as follows. D-galactose-binding lectin. Also binds N-acetyl-D-galactosamine. Has hemagglutination activity towards all types of human erythrocytes (O, A and B) and rabbit erythrocytes. Agglutinates Gram-negative and Gram-positive bacteria including E.coli DH5-alpha and L.plantarum ATCC8014, respectively, and has bacteriostatic activity against them. Also agglutinates M.lysodeikticus. May be involved in innate immunity by recognizing and eliminating pathogens. The sequence is that of Galactose-binding lectin from Mytilus californianus (California mussel).